The chain runs to 403 residues: 4-hydroxyphenylpyruvate dioxygenase (403 aa).

2 consecutive VOC domains span residues 25 to 169 (GYDH…LVER) and 201 to 359 (RIDH…LFTK). Residues His204, His287, and Glu370 each contribute to the Fe cation site.

It belongs to the 4HPPD family. As to quaternary structure, homodimer. Fe cation serves as cofactor.

The catalysed reaction is 3-(4-hydroxyphenyl)pyruvate + O2 = homogentisate + CO2. It functions in the pathway amino-acid degradation; L-phenylalanine degradation; acetoacetate and fumarate from L-phenylalanine: step 3/6. 4-hydroxyphenylpyruvate dioxygenase; part of the L-tyrosine degradation gene cluster that mediates the biosynthesis of the brownish pigment pyomelanin as an alternative melanin. The 4-hydroxyphenylpyruvate dioxygenase hppD catalyzes the conversion of 4-hydroxyphenylpyruvate to homogentisic acid (HGA). The protein hmgX is crucial for this conversion and thus, probably functions as an accessory factor to mediate specific activity of hppD. The homogentisate 1,2-dioxygenase hmgA is then involved in the cleavage of the aromatic ring of HGA and its conversion to 4-maleylacetoacetate. When hmgA activity is lowered by the cell wall integrity (CWI) signaling pathway, HGA accumulates and leads to the production of pyomelanin through benzoquinone acetic acid after oxidation and polymerization. On the opposite, in non-stress conditions, both hppD and hmgA activities are balanced and HGA is degraded into 4-maleylacetoacetate. 4-maleylacetoacetate is further converted to 4-fumarylacetoacetate by the maleylacetoacetate isomerase maiA, which is degraded into fumarate and acetoacetate by the fumarylacetoacetase fahA. The polypeptide is 4-hydroxyphenylpyruvate dioxygenase (Aspergillus fumigatus (strain ATCC MYA-4609 / CBS 101355 / FGSC A1100 / Af293) (Neosartorya fumigata)).